We begin with the raw amino-acid sequence, 3165 residues long: Protein eyes shut homolog (3165 aa).

A signal peptide spans 1–21; it reads MTDKSIIILSLMVFHSSFING. Residues Asn42, Asn105, Asn117, and Asn166 are each glycosylated (N-linked (GlcNAc...) asparagine). EGF-like domains are found at residues 170-212, 213-254, and 256-292; these read KQQF…KYCQ, ELDA…KNCS, and IIVQ…PFCE. Intrachain disulfides connect Cys174/Cys189, Cys183/Cys200, Cys202/Cys211, Cys217/Cys228, Cys222/Cys242, Cys244/Cys253, Cys260/Cys270, Cys265/Cys280, and Cys282/Cys291. 3 N-linked (GlcNAc...) asparagine glycosylation sites follow: Asn252, Asn269, and Asn272. N-linked (GlcNAc...) asparagine glycosylation is found at Asn311 and Asn343. 2 consecutive EGF-like domains span residues 332–368 and 370–406; these read DVSE…LLCK and FQTS…KNCE. 2 cysteine pairs are disulfide-bonded: Cys341–Cys356 and Cys358–Cys367. Asn382 is a glycosylation site (N-linked (GlcNAc...) asparagine). A disulfide bridge links Cys396 with Cys405. Residues Asn506, Asn520, Asn521, Asn566, and Asn573 are each glycosylated (N-linked (GlcNAc...) asparagine). 3 consecutive EGF-like domains span residues 566–602, 604–641, and 643–679; these read NITD…RLCV, NVDY…NICE, and DIED…TRCE. Intrachain disulfides connect Cys592–Cys601 and Cys608–Cys620. N-linked (GlcNAc...) asparagine glycans are attached at residues Asn611 and Asn628. Residues Cys629 and Cys640 are joined by a disulfide bond. N-linked (GlcNAc...) asparagine glycosylation is present at Asn654. Disulfide bonds link Cys669-Cys678, Cys685-Cys696, Cys690-Cys705, and Cys707-Cys719. The EGF-like 9; calcium-binding domain occupies 681–720; that stretch reads DLDECALHPCKSGATCIDQPGNYFCQCGPPFKVVDGFSCL. An EGF-like 10 domain is found at 733–769; that stretch reads NIDNCILNAFEHNSTYKDLHLSYQCVCLSGWEGNFCE. A glycan (N-linked (GlcNAc...) asparagine) is linked at Asn745. Intrachain disulfides connect Cys759-Cys768, Cys775-Cys786, Cys780-Cys795, Cys797-Cys806, Cys813-Cys824, Cys818-Cys835, Cys837-Cys846, Cys853-Cys866, Cys860-Cys876, Cys878-Cys887, Cys894-Cys905, Cys899-Cys914, Cys916-Cys925, Cys932-Cys943, Cys937-Cys952, Cys954-Cys963, Cys970-Cys981, Cys975-Cys990, Cys992-Cys1001, Cys1008-Cys1019, Cys1013-Cys1028, Cys1030-Cys1039, Cys1046-Cys1056, Cys1051-Cys1065, Cys1067-Cys1076, Cys1083-Cys1094, Cys1088-Cys1103, Cys1105-Cys1114, Cys1121-Cys1137, Cys1131-Cys1147, Cys1149-Cys1158, Cys1165-Cys1176, Cys1170-Cys1185, and Cys1187-Cys1196. In terms of domain architecture, EGF-like 11; calcium-binding spans 771-807; that stretch reads ESNECKMNPCKNNSTCTDLYKSYRCECTSGWTGQNCS. Asn782, Asn783, and Asn805 each carry an N-linked (GlcNAc...) asparagine glycan. EGF-like domains are found at residues 809–847, 849–888, and 890–926; these read EINE…QFCH, RYNP…KHCE, and DVKE…SLCE. N-linked (GlcNAc...) asparagine glycosylation is found at Asn862 and Asn863. Residues 928–964 form the EGF-like 15; calcium-binding domain; it reads EINECSSEPCKNNGTCVDLTNRFFCNCEPGYHGPFCE. N-linked (GlcNAc...) asparagine glycosylation occurs at Asn940. Positions 966 to 1002 constitute an EGF-like 16 domain; it reads EVNKCKISPCLDEENCVYRTDRYNCLCAPGYTGINCE. Residues 1004–1040 enclose the EGF-like 17; calcium-binding domain; it reads NLDECLSEPCLHDGVCIDGINHYTCDCKSGFFGTHCE. EGF-like domains follow at residues 1042–1077, 1079–1115, and 1117–1159; these read NAND…IQCK, KIND…AYCE, and SIDN…QFCE. Residues 1161–1197 enclose the EGF-like 21; calcium-binding domain; it reads NINECSSSPCLHGANCEDHINGYVCKCQPGWSGHHCE. N-linked (GlcNAc...) asparagine glycosylation is found at Asn1509, Asn1906, Asn1941, and Asn2033. A Laminin G-like 1 domain is found at 1883-2063; sequence FSCVCYYGDS…AVRNYHINNC (181 aa). Cystine bridges form between Cys2037–Cys2063, Cys2103–Cys2114, Cys2108–Cys2128, and Cys2130–Cys2139. One can recognise an EGF-like 22 domain in the interval 2099–2140; it reads APSVCQEDVCHNGGTCRPIFLSSGIVSFQCDCPLHFTGRFCE. Residues 2145–2339 form the Laminin G-like 2 domain; it reads LFFPSFSGNS…NIENCHVPWC (195 aa). 3 N-linked (GlcNAc...) asparagine glycosylation sites follow: Asn2170, Asn2185, and Asn2228. 6 disulfide bridges follow: Cys2308/Cys2339, Cys2339/Cys2350, Cys2344/Cys2359, Cys2375/Cys2386, Cys2380/Cys2396, and Cys2398/Cys2407. EGF-like domains are found at residues 2335 to 2368 and 2371 to 2408; these read HVPW…YSGK and QFAS…PLCT. Asn2347 is a glycosylation site (N-linked (GlcNAc...) asparagine). N-linked (GlcNAc...) asparagine glycosylation is found at Asn2412, Asn2453, Asn2484, Asn2506, and Asn2532. The Laminin G-like 3 domain maps to 2419-2609; the sequence is SGTDAFGYTS…PNAGRSVGQC (191 aa). 3 disulfides stabilise this stretch: Cys2576-Cys2609, Cys2614-Cys2625, and Cys2619-Cys2634. EGF-like domains lie at 2610–2646 and 2648–2689; these read HASP…AFCT and TVSI…IYCE. An N-linked (GlcNAc...) asparagine glycan is attached at Asn2635. 4 cysteine pairs are disulfide-bonded: Cys2636–Cys2645, Cys2652–Cys2668, Cys2662–Cys2677, and Cys2679–Cys2688. One can recognise a Laminin G-like 4 domain in the interval 2717 to 2895; that stretch reads DPSFRSSELS…AKGGSNVGDC (179 aa). N-linked (GlcNAc...) asparagine glycosylation is found at Asn2775, Asn2800, and Asn2824. 4 cysteine pairs are disulfide-bonded: Cys2868–Cys2895, Cys2900–Cys2911, Cys2905–Cys2920, and Cys2922–Cys2931. 2 consecutive EGF-like domains span residues 2896–2932 and 2933–2970; these read DGTA…NICN and QSAY…RYCE. Residue Asn2914 is glycosylated (N-linked (GlcNAc...) asparagine). N-linked (GlcNAc...) asparagine glycosylation occurs at Asn2932. 3 cysteine pairs are disulfide-bonded: Cys2937–Cys2948, Cys2942–Cys2958, and Cys2960–Cys2969. 6 N-linked (GlcNAc...) asparagine glycosylation sites follow: Asn2971, Asn3006, Asn3036, Asn3057, Asn3073, and Asn3082. The Laminin G-like 5 domain maps to 2975–3165; sequence FTTAKFMGNS…YDGDEQNEVT (191 aa).

This sequence belongs to the EYS family. Expressed in retina (at protein level).

The protein localises to the cell projection. The protein resides in the cilium. It localises to the photoreceptor outer segment. It is found in the cytoplasm. Its subcellular location is the cytoskeleton. The protein localises to the cilium axoneme. The protein resides in the microtubule organizing center. It localises to the centrosome. It is found in the secreted. Its subcellular location is the extracellular space. The protein localises to the extracellular matrix. The protein resides in the interphotoreceptor matrix. In terms of biological role, required to maintain the integrity of photoreceptor cells. Specifically required for normal morphology of the photoreceptor ciliary pocket, and might thus facilitate protein trafficking between the photoreceptor inner and outer segments via the transition zone. The sequence is that of Protein eyes shut homolog from Macaca fascicularis (Crab-eating macaque).